A 524-amino-acid polypeptide reads, in one-letter code: Bifunctional purine biosynthesis protein PurH (524 aa).

Residues 1-144 (MTRRALVSVS…KNSAHVGVVV (144 aa)) enclose the MGS-like domain.

The protein belongs to the PurH family.

It catalyses the reaction (6R)-10-formyltetrahydrofolate + 5-amino-1-(5-phospho-beta-D-ribosyl)imidazole-4-carboxamide = 5-formamido-1-(5-phospho-D-ribosyl)imidazole-4-carboxamide + (6S)-5,6,7,8-tetrahydrofolate. The enzyme catalyses IMP + H2O = 5-formamido-1-(5-phospho-D-ribosyl)imidazole-4-carboxamide. The protein operates within purine metabolism; IMP biosynthesis via de novo pathway; 5-formamido-1-(5-phospho-D-ribosyl)imidazole-4-carboxamide from 5-amino-1-(5-phospho-D-ribosyl)imidazole-4-carboxamide (10-formyl THF route): step 1/1. It participates in purine metabolism; IMP biosynthesis via de novo pathway; IMP from 5-formamido-1-(5-phospho-D-ribosyl)imidazole-4-carboxamide: step 1/1. The sequence is that of Bifunctional purine biosynthesis protein PurH from Anaeromyxobacter dehalogenans (strain 2CP-1 / ATCC BAA-258).